A 327-amino-acid polypeptide reads, in one-letter code: Fructose-1,6-bisphosphatase class 1 (327 aa).

Mg(2+)-binding residues include glutamate 84, aspartate 103, leucine 105, and aspartate 106. Substrate contacts are provided by residues 106–109, asparagine 198, and lysine 264; that span reads DGSS. Mg(2+) is bound at residue glutamate 270.

This sequence belongs to the FBPase class 1 family. In terms of assembly, homotetramer. The cofactor is Mg(2+).

Its subcellular location is the cytoplasm. It carries out the reaction beta-D-fructose 1,6-bisphosphate + H2O = beta-D-fructose 6-phosphate + phosphate. It participates in carbohydrate biosynthesis; gluconeogenesis. In Psychrobacter cryohalolentis (strain ATCC BAA-1226 / DSM 17306 / VKM B-2378 / K5), this protein is Fructose-1,6-bisphosphatase class 1.